The sequence spans 156 residues: Small ribosomal subunit protein uS7 (156 aa).

The protein belongs to the universal ribosomal protein uS7 family. In terms of assembly, part of the 30S ribosomal subunit. Contacts proteins S9 and S11.

In terms of biological role, one of the primary rRNA binding proteins, it binds directly to 16S rRNA where it nucleates assembly of the head domain of the 30S subunit. Is located at the subunit interface close to the decoding center, probably blocks exit of the E-site tRNA. The polypeptide is Small ribosomal subunit protein uS7 (Dinoroseobacter shibae (strain DSM 16493 / NCIMB 14021 / DFL 12)).